Consider the following 528-residue polypeptide: Probable protein phosphatase 2C 51 (528 aa).

A helical membrane pass occupies residues 8 to 28; the sequence is SLLNLGLLIIFFVFFFLVINC. The 375-residue stretch at 71-445 folds into the PPM-type phosphatase domain; it reads RCHTAAIQGR…DNMAAVVVPL (375 aa). Mn(2+)-binding residues include aspartate 117, glycine 118, aspartate 385, and aspartate 436.

The protein belongs to the PP2C family. Mg(2+) is required as a cofactor. The cofactor is Mn(2+).

The protein localises to the membrane. It catalyses the reaction O-phospho-L-seryl-[protein] + H2O = L-seryl-[protein] + phosphate. The catalysed reaction is O-phospho-L-threonyl-[protein] + H2O = L-threonyl-[protein] + phosphate. In Arabidopsis thaliana (Mouse-ear cress), this protein is Probable protein phosphatase 2C 51.